The following is an 896-amino-acid chain: Translation initiation factor IF-2 (896 aa).

Disordered stretches follow at residues 32-99 (LAQA…TALP) and 117-304 (EITS…KQAE). Residues 35–48 (AGSSDTKNSPASKA) are compositionally biased toward polar residues. Over residues 153–169 (TPERIEETPIIRTRTEP) the composition is skewed to basic and acidic residues. Low complexity predominate over residues 203–214 (AASTEETTQQQP). Positions 215–227 (RQNDAASHNNKQQ) are enriched in polar residues. Over residues 228–241 (PSGTSSRPASSAPS) the composition is skewed to low complexity. Residues 256–280 (RGSERDRSKRSDESVKAFTGRDRYG) show a composition bias toward basic and acidic residues. One can recognise a tr-type G domain in the interval 401-570 (IRSPIVAFMG…ALQAEVLELK (170 aa)). The tract at residues 410–417 (GHVDHGKT) is G1. Residue 410-417 (GHVDHGKT) participates in GTP binding. The interval 435-439 (AITQH) is G2. Residues 456 to 459 (DTPG) are G3. GTP contacts are provided by residues 456–460 (DTPGH) and 510–513 (NKCD). The G4 stretch occupies residues 510–513 (NKCD). The tract at residues 546-548 (SAK) is G5.

Belongs to the TRAFAC class translation factor GTPase superfamily. Classic translation factor GTPase family. IF-2 subfamily.

The protein localises to the cytoplasm. Its function is as follows. One of the essential components for the initiation of protein synthesis. Protects formylmethionyl-tRNA from spontaneous hydrolysis and promotes its binding to the 30S ribosomal subunits. Also involved in the hydrolysis of GTP during the formation of the 70S ribosomal complex. The sequence is that of Translation initiation factor IF-2 from Chlamydia trachomatis serovar L2 (strain ATCC VR-902B / DSM 19102 / 434/Bu).